A 919-amino-acid chain; its full sequence is Isoleucine--tRNA ligase (919 aa).

The 'HIGH' region signature appears at 57–67; that stretch reads PYANGHIHIGT. An L-isoleucyl-5'-AMP-binding site is contributed by Glu-553. The 'KMSKS' region motif lies at 594 to 598; the sequence is KMSKS. Lys-597 is a binding site for ATP. Zn(2+) is bound by residues Cys-887, Cys-890, Cys-907, and Cys-910.

This sequence belongs to the class-I aminoacyl-tRNA synthetase family. IleS type 1 subfamily. As to quaternary structure, monomer. The cofactor is Zn(2+).

It localises to the cytoplasm. It carries out the reaction tRNA(Ile) + L-isoleucine + ATP = L-isoleucyl-tRNA(Ile) + AMP + diphosphate. Its function is as follows. Catalyzes the attachment of isoleucine to tRNA(Ile). As IleRS can inadvertently accommodate and process structurally similar amino acids such as valine, to avoid such errors it has two additional distinct tRNA(Ile)-dependent editing activities. One activity is designated as 'pretransfer' editing and involves the hydrolysis of activated Val-AMP. The other activity is designated 'posttransfer' editing and involves deacylation of mischarged Val-tRNA(Ile). In Thermotoga maritima (strain ATCC 43589 / DSM 3109 / JCM 10099 / NBRC 100826 / MSB8), this protein is Isoleucine--tRNA ligase.